A 122-amino-acid chain; its full sequence is Large ribosomal subunit protein uL14 (122 aa).

The protein belongs to the universal ribosomal protein uL14 family. Part of the 50S ribosomal subunit. Forms a cluster with proteins L3 and L19. In the 70S ribosome, L14 and L19 interact and together make contacts with the 16S rRNA in bridges B5 and B8.

Binds to 23S rRNA. Forms part of two intersubunit bridges in the 70S ribosome. This is Large ribosomal subunit protein uL14 from Rickettsia typhi (strain ATCC VR-144 / Wilmington).